A 98-amino-acid chain; its full sequence is NADH-ubiquinone oxidoreductase chain 4L (98 aa).

3 helical membrane passes run 1 to 21 (MSMV…GLLI), 30 to 50 (LLCL…TILT), and 61 to 81 (IILL…LVMI).

This sequence belongs to the complex I subunit 4L family. In terms of assembly, core subunit of respiratory chain NADH dehydrogenase (Complex I) which is composed of 45 different subunits.

The protein localises to the mitochondrion inner membrane. The catalysed reaction is a ubiquinone + NADH + 5 H(+)(in) = a ubiquinol + NAD(+) + 4 H(+)(out). Functionally, core subunit of the mitochondrial membrane respiratory chain NADH dehydrogenase (Complex I) which catalyzes electron transfer from NADH through the respiratory chain, using ubiquinone as an electron acceptor. Part of the enzyme membrane arm which is embedded in the lipid bilayer and involved in proton translocation. The protein is NADH-ubiquinone oxidoreductase chain 4L (MT-ND4L) of Martes americana (American marten).